The sequence spans 63 residues: Anaphase-promoting complex subunit 13 (63 aa).

Positions 36–63 (KTDDTEETNQETQQADAETWRDLALDTQ) are disordered. Residues 53–63 (ETWRDLALDTQ) show a composition bias toward basic and acidic residues.

Belongs to the APC13 family. Component of the anaphase promoting complex/cyclosome (APC/C) complex. Expressed constitutively in roots, leaves, stems, buds, flowers, and seeds.

The protein resides in the nucleus. It functions in the pathway protein modification; protein ubiquitination. Component of the anaphase promoting complex/cyclosome (APC/C), a cell cycle-regulated E3 ubiquitin ligase that controls progression through mitosis and the G1 phase of the cell cycle. The APC/C complex acts by mediating ubiquitination and subsequent degradation of target proteins. Regulates global growth and development, including phyllotaxis and apical dominance. Required for pollen maturation. Promotes (pri) miRNA transcription of each MIR159 genes. The chain is Anaphase-promoting complex subunit 13 from Arabidopsis thaliana (Mouse-ear cress).